The following is a 65-amino-acid chain: Large ribosomal subunit protein bL35 (65 aa).

Positions 1–16 (MPKQKTHRASAKRFKR) are enriched in basic residues. Residues 1 to 20 (MPKQKTHRASAKRFKRTGSG) are disordered.

It belongs to the bacterial ribosomal protein bL35 family.

The sequence is that of Large ribosomal subunit protein bL35 from Streptococcus pyogenes serotype M1.